The following is a 345-amino-acid chain: Trace amine-associated receptor 6 (345 aa).

The Extracellular portion of the chain corresponds to 1–32; the sequence is MSSNSSLLVAVQLCYPNVNGSCVETLYSPGSR. Asn-4 and Asn-19 each carry an N-linked (GlcNAc...) asparagine glycan. Disulfide bonds link Cys-22/Cys-186 and Cys-105/Cys-190. A helical membrane pass occupies residues 33 to 53; the sequence is VILYIVFGFGAVLAVFGNLLV. Topologically, residues 54-68 are cytoplasmic; the sequence is MISILHFKQLHSPTN. The helical transmembrane segment at 69 to 89 threads the bilayer; the sequence is FLVASLACADFLVGVTVMPFS. Residues 90-107 lie on the Extracellular side of the membrane; that stretch reads MVRTVESCWYFGRSFCTF. The chain crosses the membrane as a helical span at residues 108–128; the sequence is HTCCDVAFCYSSLFHLCFISI. The Cytoplasmic portion of the chain corresponds to 129–147; that stretch reads DRYIAVTDPLVYPTKFTVS. A helical membrane pass occupies residues 148 to 168; sequence VSGICISVSWILPLMYSGAVF. Topologically, residues 169 to 202 are extracellular; it reads YTGVYDDGLEELSDALNCIGGCQTVVNQNWVLID. The helical transmembrane segment at 203–223 threads the bilayer; sequence CLSFFIPTFIMIILYGNIFLV. The Cytoplasmic segment spans residues 224–259; it reads ARRQAKKIENTGSKTESSSESYKARVARRERKAAKT. A helical transmembrane segment spans residues 260–276; sequence LGVTVVAFMISWLPYSI. Residues 277–282 are Extracellular-facing; it reads DSLIDA. Residues 283–302 form a helical membrane-spanning segment; the sequence is FMGFITPAYIYEICCWCAYY. Residues 303 to 345 lie on the Cytoplasmic side of the membrane; the sequence is NSAMNPLIYALFYPWFRKAIKVIVTGQVLKNSSATMNLFSEHI.

The protein belongs to the G-protein coupled receptor 1 family.

It localises to the cell membrane. Olfactory receptor specific for trace amines, such as beta-phenylethylamine (beta-PEA). Trace amine compounds are enriched in animal body fluids and act on trace amine-associated receptors (TAARs) to elicit both intraspecific and interspecific innate behaviors. Beta-PEA-binding causes a conformation change that triggers signaling via G(s)-class of G alpha proteins (GNAL or GNAS). The protein is Trace amine-associated receptor 6 (TAAR6) of Pan troglodytes (Chimpanzee).